The following is a 667-amino-acid chain: DNA ligase (667 aa).

NAD(+) contacts are provided by residues 32 to 36 (DKDYD) and 80 to 81 (SL). Residue K121 is the N6-AMP-lysine intermediate of the active site. NAD(+)-binding residues include R143, E178, and K314. C407, C410, C423, and C429 together coordinate Zn(2+). The BRCT domain occupies 587 to 667 (IVESIFKDKT…EFEKMLGRES (81 aa)).

The protein belongs to the NAD-dependent DNA ligase family. LigA subfamily. Requires Mg(2+) as cofactor. Mn(2+) is required as a cofactor.

It carries out the reaction NAD(+) + (deoxyribonucleotide)n-3'-hydroxyl + 5'-phospho-(deoxyribonucleotide)m = (deoxyribonucleotide)n+m + AMP + beta-nicotinamide D-nucleotide.. Its function is as follows. DNA ligase that catalyzes the formation of phosphodiester linkages between 5'-phosphoryl and 3'-hydroxyl groups in double-stranded DNA using NAD as a coenzyme and as the energy source for the reaction. It is essential for DNA replication and repair of damaged DNA. In Clostridium botulinum (strain Alaska E43 / Type E3), this protein is DNA ligase.